The following is a 64-amino-acid chain: Beta-insect depressant toxin BmKIT4 (64 aa).

Residues 1-61 form the LCN-type CS-alpha/beta domain; it reads DGYIRGSNGC…TWKSESNTCG (61 aa). 4 disulfide bridges follow: cysteine 10–cysteine 60, cysteine 14–cysteine 35, cysteine 21–cysteine 42, and cysteine 25–cysteine 44. Residue cysteine 60 is modified to Cysteine amide.

Belongs to the long (4 C-C) scorpion toxin superfamily. Sodium channel inhibitor family. Beta subfamily. Expressed by the venom gland.

Its subcellular location is the secreted. Depressant insect beta-toxins cause a transient contraction paralysis followed by a slow flaccid paralysis. They bind voltage-independently at site-4 of sodium channels (Nav) and shift the voltage of activation toward more negative potentials thereby affecting sodium channel activation and promoting spontaneous and repetitive firing. This toxin is active only on insects. In Olivierus martensii (Manchurian scorpion), this protein is Beta-insect depressant toxin BmKIT4.